A 32-amino-acid polypeptide reads, in one-letter code: Delta-conotoxin-like MVID (32 aa).

Disulfide bonds link Cys3–Cys18, Cys10–Cys22, and Cys17–Cys27. Pro14 is subject to 4-hydroxyproline.

The protein belongs to the conotoxin O1 superfamily. As to expression, expressed by the venom duct.

It is found in the secreted. Delta-conotoxins bind to site 6 of voltage-gated sodium channels (Nav) and inhibit the inactivation process. This chain is Delta-conotoxin-like MVID, found in Conus magus (Magical cone).